The chain runs to 419 residues: Inward rectifier potassium channel 16 (419 aa).

Over 1–67 (MSYYGSSYRI…MVDIFTTLVD (67 aa)) the chain is Cytoplasmic. The helical transmembrane segment at 68–94 (TKWRHMFVIFSLSYILSWLIFGSIFWL) threads the bilayer. Topologically, residues 95 to 117 (IAFHHGDLLSDPDITPCVDNVHS) are extracellular. The helical; Pore-forming intramembrane region spans 118-134 (FTAAFLFSLETQTTIGY). Positions 131–136 (TIGYGY) match the Selectivity filter motif. Over 135–143 (GYRCVTEEC) the chain is Extracellular. The helical transmembrane segment at 144 to 171 (SVAVLTVILQSILSCIINTFIIGAALAK) threads the bilayer. Residues 172-419 (MATARKRAQT…LNRISMESQM (248 aa)) are Cytoplasmic-facing. Ser-358, Ser-374, and Ser-376 each carry phosphoserine.

Belongs to the inward rectifier-type potassium channel (TC 1.A.2.1) family. KCNJ16 subfamily. As to quaternary structure, it forms heteromeric channels with Kir4.1/KCNJ10; this interaction is required for KCNJ16 localization to the basolateral membrane in kidney cells. As a heteromer with KCNJ10, may interact with MAGI1; this interaction may facilitate KCNJ10/KCNJ16 potassium channel expression at the basolateral membrane in kidney cells. May form heteromers with Kir2.1/KCNJ2. Can form heteromeric channels with Kir4.2/KCNJ15. As to expression, abundantly expressed in the proximal and distal segments of the nephron.

It localises to the membrane. The protein resides in the basolateral cell membrane. It catalyses the reaction K(+)(in) = K(+)(out). Channel activity is strongly regulated by variations of cytosolic pH; channels are activated by alkaline and inhibited by acidic pH values. Activated by phosphatidylinositol 4,5 biphosphate (PtdIns(4,5)P2). Inward rectifier potassium channels are characterized by a greater tendency to allow potassium to flow into the cell rather than out of it. Their voltage dependence is regulated by the concentration of extracellular potassium; as external potassium is raised, the voltage range of the channel opening shifts to more positive voltages. The inward rectification is mainly due to the blockage of outward current by internal magnesium. KCNJ16 may be involved in the regulation of fluid and pH balance. In the kidney, together with KCNJ10, mediates basolateral K(+) recycling in distal tubules; this process is critical for Na(+) reabsorption at the tubules. This chain is Inward rectifier potassium channel 16 (Kcnj16), found in Mus musculus (Mouse).